A 155-amino-acid polypeptide reads, in one-letter code: SsrA-binding protein (155 aa).

The disordered stretch occupies residues 136 to 155 (REDLKRRQDQRDIQRAMKSY).

The protein belongs to the SmpB family.

It localises to the cytoplasm. Its function is as follows. Required for rescue of stalled ribosomes mediated by trans-translation. Binds to transfer-messenger RNA (tmRNA), required for stable association of tmRNA with ribosomes. tmRNA and SmpB together mimic tRNA shape, replacing the anticodon stem-loop with SmpB. tmRNA is encoded by the ssrA gene; the 2 termini fold to resemble tRNA(Ala) and it encodes a 'tag peptide', a short internal open reading frame. During trans-translation Ala-aminoacylated tmRNA acts like a tRNA, entering the A-site of stalled ribosomes, displacing the stalled mRNA. The ribosome then switches to translate the ORF on the tmRNA; the nascent peptide is terminated with the 'tag peptide' encoded by the tmRNA and targeted for degradation. The ribosome is freed to recommence translation, which seems to be the essential function of trans-translation. The protein is SsrA-binding protein of Nostoc punctiforme (strain ATCC 29133 / PCC 73102).